The following is a 515-amino-acid chain: Protein DETOXIFICATION 42 (515 aa).

The Cytoplasmic segment spans residues 1–35 (MMSEDGYNTDFPRNPLYIFFSDFRSVLKFDELGLE). A helical transmembrane segment spans residues 36–56 (IARIALPAALALTADPIASLV). Residues 57-58 (DT) lie on the Extracellular side of the membrane. Residues 59–79 (AFIGQIGPVELAAVGVSIALF) traverse the membrane as a helical segment. Topologically, residues 80-168 (NQVSRIAIFP…AKKRNIPSAS (89 aa)) are cytoplasmic. The chain crosses the membrane as a helical span at residues 169–189 (SALIIGGVLGLFQAVFLISAA). Residues 190-211 (KPLLSFMGVKHDSPMMRPSQRY) are Extracellular-facing. The chain crosses the membrane as a helical span at residues 212-232 (LSLRSLGAPAVLLSLAAQGVF). Residues 233–242 (RGFKDTTTPL) lie on the Cytoplasmic side of the membrane. The chain crosses the membrane as a helical span at residues 243 to 263 (FATVIGDVTNIILDPIFIFVF). Topologically, residues 264–266 (RLG) are extracellular. Residues 267 to 287 (VTGAATAHVISQYLMCGILLW) traverse the membrane as a helical segment. Over 288-312 (KLMGQVDIFNMSTKHLQFCRFMKNG) the chain is Cytoplasmic. The chain crosses the membrane as a helical span at residues 313-333 (FLLLMRVIAVTFCVTLSASLA). Over 334-349 (AREGSTSMAAFQVCLQ) the chain is Extracellular. Residues 350–370 (VWLATSLLADGYAVAGQAILA) traverse the membrane as a helical segment. Over 371 to 390 (SAFAKKDYKRAAATASRVLQ) the chain is Cytoplasmic. The chain crosses the membrane as a helical span at residues 391 to 411 (LGLVLGFVLAVILGAGLHFGA). Residues 412-423 (RVFTKDDKVLHL) lie on the Extracellular side of the membrane. The helical transmembrane segment at 424-444 (ISIGLPFVAGTQPINALAFVF) threads the bilayer. Over 445–453 (DGVNFGASD) the chain is Cytoplasmic. The chain crosses the membrane as a helical span at residues 454–474 (FGYAAASLVMVAIVSILCLLF). Over 475–480 (LSSTHG) the chain is Extracellular. The helical transmembrane segment at 481–501 (FIGLWFGLTIYMSLRAAVGFW) threads the bilayer. Residues 502–515 (RIGTGTGPWSFLRS) lie on the Cytoplasmic side of the membrane.

The protein belongs to the multi antimicrobial extrusion (MATE) (TC 2.A.66.1) family. As to expression, expressed in roots, but not in shoots. Detected in the mature regions of the root, extending from above the root-hair region to the root-shoot junction.

It localises to the cell membrane. In terms of biological role, citrate transporter critical for aluminum tolerance. Responsible for citrate exudation into the rhizosphere to protect roots from aluminum toxicity. This Arabidopsis thaliana (Mouse-ear cress) protein is Protein DETOXIFICATION 42.